Consider the following 431-residue polypeptide: FAD-dependent monooxygenase nodY1 (431 aa).

The first 21 residues, 1–21 (MASTGVSVIVVGLGLAGLTTA), serve as a signal peptide directing secretion. FAD-binding residues include E35 and R110. R188 is an active-site residue. D313 contacts FAD.

It belongs to the paxM FAD-dependent monooxygenase family. FAD serves as cofactor.

Its pathway is secondary metabolite biosynthesis. Its function is as follows. FAD-dependent monooxygenase; part of the gene cluster that mediates the biosynthesis of the indole diterpenes nodulisporic acids (NA). Nodulisporic acid A (NAA) and its chemically modified derivatives are of particular significance because of their highly potent insecticidal activity against blood-feeding arthropods and lack of observable adverse effects on mammals, in particular the tremogenicity associated with the paspaline-derived IDTs is not observed. The geranylgeranyl diphosphate (GGPP) synthase ggs1, localized outside of the cluster, is proposed to catalyze the first step in nodulisporic acid biosynthesis via conversion of farnesyl pyrophosphate and isopentyl pyrophosphate into geranylgeranyl pyrophosphate (GGPP). Condensation of indole-3-glycerol phosphate with GGPP by the prenyl transferase nodC then forms 3-geranylgeranylindole (3-GGI). Epoxidation by the FAD-dependent monooxygenase nodM leads to a single-epoxidized-GGI that is substrate of the terpene cyclase nodB for cyclization to yield emindole SB. The terminal methyl carbon, C28, of emindole SB is then oxidized by the cytochrome P450 monooxygenase nodW to produce nodulisporic acid F (NAF), the pentacyclic core of NAA. NAF is converted to nodulisporic acid E (NAE) via prenylation. This step is probably performed by one of the indole diterpene prenyltransferases nodD1 or nodD2. Several oxidation steps performed by the FAD-linked oxidoreductase nodO and one of the cytochrome P450 monooxygenase nodR, nodX or nodZ further convert NAE to nodulisporic acid D (NAD). NAD is substrate of cytochrome P450 monooxygenase nodJ to produce the precursor of nodulisporic acid C (NAC), converted to NAC by one of the indole diterpene prenyltransferases nodD1 or nodD2. The FAD-dependent monooxygenase nodY2 then oxidizes NAC to nodulisporic acid B (NAB). Finally NAB is converted to NAA by one of the cytochrome P450 monooxygenases nodR, nodX or nodZ. This chain is FAD-dependent monooxygenase nodY1, found in Hypoxylon pulicicidum.